Here is a 186-residue protein sequence, read N- to C-terminus: Threonylcarbamoyl-AMP synthase (186 aa).

Residues 1–186 enclose the YrdC-like domain; it reads MADTWEAAHS…LNNQVFRDDA (186 aa).

This sequence belongs to the SUA5 family. TsaC subfamily.

It is found in the cytoplasm. The enzyme catalyses L-threonine + hydrogencarbonate + ATP = L-threonylcarbamoyladenylate + diphosphate + H2O. In terms of biological role, required for the formation of a threonylcarbamoyl group on adenosine at position 37 (t(6)A37) in tRNAs that read codons beginning with adenine. Catalyzes the conversion of L-threonine, HCO(3)(-)/CO(2) and ATP to give threonylcarbamoyl-AMP (TC-AMP) as the acyladenylate intermediate, with the release of diphosphate. This Idiomarina loihiensis (strain ATCC BAA-735 / DSM 15497 / L2-TR) protein is Threonylcarbamoyl-AMP synthase.